The chain runs to 105 residues: Vacuolar ATPase assembly integral membrane protein VMA21 homolog (105 aa).

The disordered stretch occupies residues 1–26 (MSTKNKKAAGGNGGAPKQTRQQSHDS). The Cytoplasmic portion of the chain corresponds to 1–36 (MSTKNKKAAGGNGGAPKQTRQQSHDSQDYSSFKTVL). Residues 37–57 (FYCMLIVFLPVLTFFVLKGFV) traverse the membrane as a helical segment. The Lumenal segment spans residues 58 to 68 (LDQFLDISEVK). A helical transmembrane segment spans residues 69–89 (VNIASAVGAVVALHIALGLYI). Residues 90–105 (YRAYFGAPGSKGSKTD) lie on the Cytoplasmic side of the membrane.

This sequence belongs to the VMA21 family.

The protein resides in the endoplasmic reticulum membrane. It localises to the endoplasmic reticulum-Golgi intermediate compartment membrane. The protein localises to the cytoplasmic vesicle. Its subcellular location is the COPII-coated vesicle membrane. Its function is as follows. Required for the assembly of the V0 complex of the vacuolar ATPase (V-ATPase) in the endoplasmic reticulum. In Drosophila simulans (Fruit fly), this protein is Vacuolar ATPase assembly integral membrane protein VMA21 homolog.